A 379-amino-acid polypeptide reads, in one-letter code: Protein COS2 (379 aa).

At 1 to 72 the chain is on the cytoplasmic side; that stretch reads MKENELKNEK…WKLSNNCIYP (72 aa). The helical transmembrane segment at 73–93 threads the bilayer; sequence LIVSLLVLFLGPIFVLVICGL. Over 94-254 the chain is Extracellular; that stretch reads SRKRSLSKQL…FLCCIYVSRG (161 aa). The chain crosses the membrane as a helical span at residues 255 to 275; it reads MCLLLRTLYLGWILFMLVQGF. The Cytoplasmic portion of the chain corresponds to 276-379; the sequence is QNIRVLIMSM…QLSRSEVLLV (104 aa).

It belongs to the DUP/COS family.

It localises to the membrane. The protein is Protein COS2 (COS2) of Saccharomyces cerevisiae (strain ATCC 204508 / S288c) (Baker's yeast).